The primary structure comprises 202 residues: Cyclin-U4-1 (202 aa).

It belongs to the cyclin family. Cyclin U/P subfamily. As to quaternary structure, interacts with CDKA-1. As to expression, expressed in roots, stems and flowers. Expressed in the shoot apex, leaf primordia and young leaves.

This is Cyclin-U4-1 (CYCU4-1) from Arabidopsis thaliana (Mouse-ear cress).